Consider the following 205-residue polypeptide: G-protein coupled receptor (205 aa).

Helical transmembrane passes span 40-60, 71-91, 107-127, 151-171, and 185-205; these read GITL…MILY, FYVI…FFMT, LVYF…AIIA, IGIL…FVQI, and LSSP…SFIW. Residues Cys-105 and Cys-181 are joined by a disulfide bond.

It belongs to the G-protein coupled receptor 1 family.

It is found in the host membrane. In Human herpesvirus 6B (strain Z29) (HHV-6 variant B), this protein is G-protein coupled receptor (U12).